A 294-amino-acid polypeptide reads, in one-letter code: 33 kDa chaperonin (294 aa).

Intrachain disulfides connect Cys239-Cys241 and Cys272-Cys275.

Belongs to the HSP33 family. Under oxidizing conditions two disulfide bonds are formed involving the reactive cysteines. Under reducing conditions zinc is bound to the reactive cysteines and the protein is inactive.

It is found in the cytoplasm. In terms of biological role, redox regulated molecular chaperone. Protects both thermally unfolding and oxidatively damaged proteins from irreversible aggregation. Plays an important role in the bacterial defense system toward oxidative stress. The polypeptide is 33 kDa chaperonin (Listeria monocytogenes serotype 4a (strain HCC23)).